Here is a 427-residue protein sequence, read N- to C-terminus: Peptidase B (427 aa).

Residues Lys-195 and Asp-200 each coordinate Mn(2+). Lys-207 is an active-site residue. Mn(2+)-binding residues include Asp-218, Asp-277, and Glu-279. The active site involves Arg-281.

The protein belongs to the peptidase M17 family. In terms of assembly, homohexamer. Requires Mn(2+) as cofactor.

It localises to the cytoplasm. The enzyme catalyses Release of an N-terminal amino acid, Xaa, from a peptide or arylamide. Xaa is preferably Glu or Asp but may be other amino acids, including Leu, Met, His, Cys and Gln.. Probably plays an important role in intracellular peptide degradation. In Shigella flexneri serotype 5b (strain 8401), this protein is Peptidase B.